We begin with the raw amino-acid sequence, 424 residues long: UDP-N-acetylglucosamine 1-carboxyvinyltransferase (424 aa).

22–23 (KN) contacts phosphoenolpyruvate. Arg-93 is a binding site for UDP-N-acetyl-alpha-D-glucosamine. The active-site Proton donor is Cys-117. Position 117 is a 2-(S-cysteinyl)pyruvic acid O-phosphothioketal (Cys-117). Residues 122-126 (RPIDL), Asp-307, and Val-329 contribute to the UDP-N-acetyl-alpha-D-glucosamine site.

The protein belongs to the EPSP synthase family. MurA subfamily.

It localises to the cytoplasm. The catalysed reaction is phosphoenolpyruvate + UDP-N-acetyl-alpha-D-glucosamine = UDP-N-acetyl-3-O-(1-carboxyvinyl)-alpha-D-glucosamine + phosphate. Its pathway is cell wall biogenesis; peptidoglycan biosynthesis. Cell wall formation. Adds enolpyruvyl to UDP-N-acetylglucosamine. The chain is UDP-N-acetylglucosamine 1-carboxyvinyltransferase from Chlorobium limicola (strain DSM 245 / NBRC 103803 / 6330).